A 181-amino-acid chain; its full sequence is MAADAKNLIWIDLEMTGLEPEVDRILEIATLVTDQDLNILAQGPVIAIHQSDEVLAAMDDWNQQHHGASGLIERVRSSQYTEADAIAQTIDFLSLHVPKGVSPMCGNSVGQDRRFLNKYMRELEDFFHYRNIDVSTIKELVKRWDPEVMKGFKKQGTHQALLDIQESIAELQFYRDKVFKI.

Positions 8–171 constitute an Exonuclease domain; it reads LIWIDLEMTG…LDIQESIAEL (164 aa). The active site involves tyrosine 129.

Belongs to the oligoribonuclease family.

It is found in the cytoplasm. 3'-to-5' exoribonuclease specific for small oligoribonucleotides. In Shewanella amazonensis (strain ATCC BAA-1098 / SB2B), this protein is Oligoribonuclease.